Consider the following 88-residue polypeptide: Putative membrane protein insertion efficiency factor (88 aa).

The protein belongs to the UPF0161 family.

Its subcellular location is the cell membrane. In terms of biological role, could be involved in insertion of integral membrane proteins into the membrane. In Lactococcus lactis subsp. lactis (strain IL1403) (Streptococcus lactis), this protein is Putative membrane protein insertion efficiency factor (yrcB).